A 427-amino-acid polypeptide reads, in one-letter code: Enolase 2 (427 aa).

Glutamine 163 contributes to the (2R)-2-phosphoglycerate binding site. The active-site Proton donor is glutamate 205. Mg(2+) is bound by residues aspartate 242, glutamate 285, and aspartate 312. Positions 337, 366, 367, and 388 each coordinate (2R)-2-phosphoglycerate. Residue lysine 337 is the Proton acceptor of the active site.

This sequence belongs to the enolase family. As to quaternary structure, component of the RNA degradosome, a multiprotein complex involved in RNA processing and mRNA degradation. The cofactor is Mg(2+).

Its subcellular location is the cytoplasm. The protein localises to the secreted. It is found in the cell surface. It carries out the reaction (2R)-2-phosphoglycerate = phosphoenolpyruvate + H2O. It participates in carbohydrate degradation; glycolysis; pyruvate from D-glyceraldehyde 3-phosphate: step 4/5. In terms of biological role, catalyzes the reversible conversion of 2-phosphoglycerate (2-PG) into phosphoenolpyruvate (PEP). It is essential for the degradation of carbohydrates via glycolysis. The chain is Enolase 2 from Methylococcus capsulatus (strain ATCC 33009 / NCIMB 11132 / Bath).